The following is a 394-amino-acid chain: Seipin (394 aa).

The Cytoplasmic segment spans residues 1–27; the sequence is MVNDPPVPALLWAQEMGHVMAGRARKL. A helical membrane pass occupies residues 28–48; that stretch reads LLQFGVFFCTILLLLWVSVFL. Residues 49–242 lie on the Lumenal side of the membrane; it reads YGSFYYSYMP…TCAFVGVASN (194 aa). Asn-88 and Asn-242 each carry an N-linked (GlcNAc...) asparagine glycan. A helical transmembrane segment spans residues 243–263; sequence FTFLSVIVLFSYMQWVWGGIW. Residues 264–394 lie on the Cytoplasmic side of the membrane; the sequence is PRQRLSLQVN…VRQRPICSSS (131 aa). Residues 281-394 form a disordered region; the sequence is RKDIQRKVSA…VRQRPICSSS (114 aa). Ser-289 carries the post-translational modification Phosphoserine. A compositionally biased stretch (low complexity) spans 292-303; that stretch reads QPGPQGQEESPQ. Ser-346 and Ser-351 each carry phosphoserine.

It belongs to the seipin family. Undecamer (an oligomer having eleven subunits). Oligomerization is important for its function in lipid droplet formation. Interacts with LDAF1 to form an oligomeric complex. Interacts with RAB18. Interacts with ZFYVE1 in a RAB18-dependent manner.

The protein resides in the endoplasmic reticulum membrane. It localises to the lipid droplet. Its function is as follows. Plays a crucial role in the formation of lipid droplets (LDs) which are storage organelles at the center of lipid and energy homeostasis. In association with LDAF1, defines the sites of LD formation in the ER. Also required for growth and maturation of small nascent LDs into larger mature LDs. Mediates the formation and/or stabilization of endoplasmic reticulum-lipid droplets (ER-LD) contacts, facilitating protein and lipid delivery from the ER into growing LDs. Regulates the maturation of ZFYVE1-positive nascent LDs and the function of the RAB18-ZFYVE1 complex in mediating the formation of ER-LD contacts. Binds anionic phospholipids including phosphatidic acid. Plays an important role in the differentiation and development of adipocytes. The sequence is that of Seipin from Bos taurus (Bovine).